We begin with the raw amino-acid sequence, 454 residues long: tRNA(Ile)-lysidine synthase (454 aa).

Residue 27-32 (SGGSDS) participates in ATP binding.

It belongs to the tRNA(Ile)-lysidine synthase family.

Its subcellular location is the cytoplasm. The enzyme catalyses cytidine(34) in tRNA(Ile2) + L-lysine + ATP = lysidine(34) in tRNA(Ile2) + AMP + diphosphate + H(+). Functionally, ligates lysine onto the cytidine present at position 34 of the AUA codon-specific tRNA(Ile) that contains the anticodon CAU, in an ATP-dependent manner. Cytidine is converted to lysidine, thus changing the amino acid specificity of the tRNA from methionine to isoleucine. The sequence is that of tRNA(Ile)-lysidine synthase from Mesorhizobium japonicum (strain LMG 29417 / CECT 9101 / MAFF 303099) (Mesorhizobium loti (strain MAFF 303099)).